Reading from the N-terminus, the 398-residue chain is CCA-adding enzyme (398 aa).

Residues Gly32 and Arg35 each coordinate ATP. Residues Gly32 and Arg35 each contribute to the CTP site. Residues Asp45 and Asp47 each contribute to the Mg(2+) site. Arg119, Asp162, Arg165, Arg168, and Arg171 together coordinate ATP. Residues Arg119, Asp162, Arg165, Arg168, and Arg171 each contribute to the CTP site.

This sequence belongs to the tRNA nucleotidyltransferase/poly(A) polymerase family. Bacterial CCA-adding enzyme type 3 subfamily. As to quaternary structure, homodimer. Mg(2+) serves as cofactor.

It carries out the reaction a tRNA precursor + 2 CTP + ATP = a tRNA with a 3' CCA end + 3 diphosphate. It catalyses the reaction a tRNA with a 3' CCA end + 2 CTP + ATP = a tRNA with a 3' CCACCA end + 3 diphosphate. Its function is as follows. Catalyzes the addition and repair of the essential 3'-terminal CCA sequence in tRNAs without using a nucleic acid template. Adds these three nucleotides in the order of C, C, and A to the tRNA nucleotide-73, using CTP and ATP as substrates and producing inorganic pyrophosphate. tRNA 3'-terminal CCA addition is required both for tRNA processing and repair. Also involved in tRNA surveillance by mediating tandem CCA addition to generate a CCACCA at the 3' terminus of unstable tRNAs. While stable tRNAs receive only 3'-terminal CCA, unstable tRNAs are marked with CCACCA and rapidly degraded. The polypeptide is CCA-adding enzyme (Lactococcus lactis subsp. lactis (strain IL1403) (Streptococcus lactis)).